We begin with the raw amino-acid sequence, 323 residues long: Arginase (323 aa).

His-119, Asp-142, His-144, and Asp-146 together coordinate Mn(2+). Residues 144-148 (HADIN), 155-157 (SKN), and Asp-198 contribute to the substrate site. Residues Asp-247 and Asp-249 each contribute to the Mn(2+) site. Positions 261 and 292 each coordinate substrate.

This sequence belongs to the arginase family. As to quaternary structure, homotrimer. Mn(2+) serves as cofactor.

It catalyses the reaction L-arginine + H2O = urea + L-ornithine. It participates in nitrogen metabolism; urea cycle; L-ornithine and urea from L-arginine: step 1/1. In Schizosaccharomyces pombe (strain 972 / ATCC 24843) (Fission yeast), this protein is Arginase (car1).